The following is a 196-amino-acid chain: Pyridoxal 5'-phosphate synthase subunit PdxT (196 aa).

47-49 serves as a coordination point for L-glutamine; sequence GES. Cys79 functions as the Nucleophile in the catalytic mechanism. L-glutamine-binding positions include Arg106 and 134–135; that span reads IR. Catalysis depends on charge relay system residues His170 and Glu172.

The protein belongs to the glutaminase PdxT/SNO family. In the presence of PdxS, forms a dodecamer of heterodimers. Only shows activity in the heterodimer.

It catalyses the reaction aldehydo-D-ribose 5-phosphate + D-glyceraldehyde 3-phosphate + L-glutamine = pyridoxal 5'-phosphate + L-glutamate + phosphate + 3 H2O + H(+). The enzyme catalyses L-glutamine + H2O = L-glutamate + NH4(+). It functions in the pathway cofactor biosynthesis; pyridoxal 5'-phosphate biosynthesis. Catalyzes the hydrolysis of glutamine to glutamate and ammonia as part of the biosynthesis of pyridoxal 5'-phosphate. The resulting ammonia molecule is channeled to the active site of PdxS. In Bacillus pumilus (strain SAFR-032), this protein is Pyridoxal 5'-phosphate synthase subunit PdxT.